The following is a 324-amino-acid chain: Glyoxylate/hydroxypyruvate reductase B (324 aa).

Residues Arg-237 and Glu-266 contribute to the active site. The active-site Proton donor is the His-285.

The protein belongs to the D-isomer specific 2-hydroxyacid dehydrogenase family. GhrB subfamily. Homodimer.

It is found in the cytoplasm. The enzyme catalyses glycolate + NADP(+) = glyoxylate + NADPH + H(+). It catalyses the reaction (R)-glycerate + NAD(+) = 3-hydroxypyruvate + NADH + H(+). The catalysed reaction is (R)-glycerate + NADP(+) = 3-hydroxypyruvate + NADPH + H(+). In terms of biological role, catalyzes the NADPH-dependent reduction of glyoxylate and hydroxypyruvate into glycolate and glycerate, respectively. The chain is Glyoxylate/hydroxypyruvate reductase B from Shigella boydii serotype 4 (strain Sb227).